A 288-amino-acid polypeptide reads, in one-letter code: Oxaloacetate decarboxylase (288 aa).

Serine 47 serves as a coordination point for substrate. Aspartate 85 is a Mg(2+) binding site. Residues arginine 156 and histidine 232 each coordinate substrate.

It belongs to the isocitrate lyase/PEP mutase superfamily. Oxaloacetate decarboxylase family. Homotetramer; dimer of dimers. Requires Mg(2+) as cofactor.

The catalysed reaction is oxaloacetate + H(+) = pyruvate + CO2. In terms of biological role, catalyzes the decarboxylation of oxaloacetate into pyruvate. Seems to play a role in maintaining cellular concentrations of bicarbonate and pyruvate. This Rhodopseudomonas palustris (strain ATCC BAA-98 / CGA009) protein is Oxaloacetate decarboxylase.